The primary structure comprises 138 residues: Small ribosomal subunit protein uS11c (138 aa).

The disordered stretch occupies residues 1-21; that stretch reads MAKSIPKIGSRKTGRIGSRKH. Basic residues predominate over residues 9 to 21; the sequence is GSRKTGRIGSRKH.

This sequence belongs to the universal ribosomal protein uS11 family. In terms of assembly, part of the 30S ribosomal subunit.

It is found in the plastid. The protein localises to the chloroplast. The protein is Small ribosomal subunit protein uS11c of Pisum sativum (Garden pea).